We begin with the raw amino-acid sequence, 447 residues long: F-box only protein 5 (447 aa).

S94 and S102 each carry phosphoserine. The interval A135–V244 is interaction with EVI5. Positions L250–S296 constitute an F-box domain. The segment at T261–K339 is sufficient for interaction with RPS6KA2; Prevents association of CDC20 with RPS6KA2. Residues T261–C409 are requires for efficient binding to CDC20. The inhibits APC ubiquitin ligase activity stretch occupies residues N305–L447. Positions R322–L325 are competitively blocks access of APC substrates to the D-box coreceptor formed by FZR1 and ANAPC10. Residues L337 to R358 are disordered. Positions T343 to S357 are enriched in polar residues. The ZBR-type zinc finger occupies S374–G422. Positions 378, 381, 396, 401, 406, 409, 414, and 419 each coordinate Zn(2+). The allows a rapid multiple mono-ubiquitination of the APC substrate, but strongly inhibits the slow ubiquitin chain elongation catalyzed by UBCH10 stretch occupies residues C378 to S420. The sufficient to suppress UBE2S activity; essential for interaction with UBE2S; competitively inhibits the rapide ubiquitin chain elongation by UBE2D1 which blocks UBE2D1 with APC; indispensable for recruitment and position of FBXO5 to the catalytic site of APC; abrogates the inhibition of ubiquitin chain assembly primarily catalyzed by UBE2S; inhibits the ubiquitination by either UBE2C or UBE2D1 stretch occupies residues T437–L447.

Part of a SCF (SKP1-cullin-F-box) protein ligase complex. Interacts with BTRC; mediates proteolysis by the SCF ubiquitin ligase complex leading to activation of APC in late mitosis and subsequent mitotic progression. Interacts with FZR1/CDH1 and the N-terminal substrate-binding domain of CDC20; prevents APC activation. Also interacts with EVI5 which blocks its phosphorylation by PLK1 and prevents its subsequent binding to BTRC and degradation. Interacts simultaneously with anaphase promoting complex (APC), through at least ANAPC2, CDC23, CDC27, the APC substrate GMNN and the APC activator FZR1. Interacts with UBE2S; interferes with the activity of UBE2S mainly by disrupting the dynamic electrostatic association between the C-terminal tail of UBE2S and ANAPC2. Interacts with RPS6KA2; cooperates to induce the metaphase arrest of early blastomeres; increases and stabilizes interaction of FBXO5 with CDC20. In terms of processing, phosphorylation by CDK2 and subsequently by PLK1 triggers degradation during early mitosis through ubiquitin-mediated proteolysis by the SCF ubiquitin ligase complex containing the F-box protein BTRC. This degradation is necessary for the activation of APC in late mitosis and subsequent mitotic progression. Phosphorylated by RPS6KA2; increases and stabilizes interaction with CDC20. Post-translationally, ubiquitinated by the SCF(BTRC) complex following phosphorylation by PLK1. Undergoes both 'Lys-11' and 'Lys-48'-linked polyubiquitination by APC-FZR1 complex leading to degradation by proteasome during G1 phase. Degraded through the SCF(BTRC) complex; degradation occurs during oocyte maturation, between germinal vesicle breakdown (GVBD) and meiosis I, and is required for the meiosis I-meiosis II transition.

It localises to the nucleus. Its subcellular location is the cytoplasm. It is found in the cytoskeleton. The protein localises to the spindle. It functions in the pathway protein modification; protein ubiquitination. In terms of biological role, regulator of APC activity during mitotic and meiotic cell cycle. During mitotic cell cycle plays a role as both substrate and inhibitor of APC-FZR1 complex. During G1 phase, plays a role as substrate of APC-FZR1 complex E3 ligase. Then switches as an inhibitor of APC-FZR1 complex during S and G2 leading to cell-cycle commitment. As APC inhibitor, prevents the degradation of APC substrates at multiple levels: by interacting with APC and blocking access of APC substrates to the D-box coreceptor, formed by FZR1 and ANAPC10; by suppressing ubiquitin ligation and chain elongation by APC by preventing the UBE2C and UBE2S activities. Plays a role in genome integrity preservation by coordinating DNA replication with mitosis through APC inhibition in interphase to stabilize CCNA2 and GMNN in order to promote mitosis and prevent rereplication and DNA damage-induced cellular senescence. During oocyte maturation, plays a role in meiosis through inactivation of APC-FZR1 complex. Inhibits APC through RPS6KA2 interaction that increases FBXO5 affiniy for CDC20 leading to the metaphase arrest of the second meiotic division before fertilization. Controls entry into the first meiotic division through inactivation of APC-FZR1 complex. Promotes migration and osteogenic differentiation of mesenchymal stem cells. In Homo sapiens (Human), this protein is F-box only protein 5.